The primary structure comprises 428 residues: Phosphoribosylamine--glycine ligase (428 aa).

The 207-residue stretch at 107–313 folds into the ATP-grasp domain; it reads KQVMKTYNIP…LVNVIESLLD (207 aa). An ATP-binding site is contributed by 133–194; it reads VEAEGVPIVI…EEYLEGEELS (62 aa). 2 residues coordinate Mg(2+): glutamate 283 and asparagine 285.

The protein belongs to the GARS family. Mg(2+) is required as a cofactor. The cofactor is Mn(2+).

It carries out the reaction 5-phospho-beta-D-ribosylamine + glycine + ATP = N(1)-(5-phospho-beta-D-ribosyl)glycinamide + ADP + phosphate + H(+). It participates in purine metabolism; IMP biosynthesis via de novo pathway; N(1)-(5-phospho-D-ribosyl)glycinamide from 5-phospho-alpha-D-ribose 1-diphosphate: step 2/2. In Halalkalibacterium halodurans (strain ATCC BAA-125 / DSM 18197 / FERM 7344 / JCM 9153 / C-125) (Bacillus halodurans), this protein is Phosphoribosylamine--glycine ligase.